An 880-amino-acid chain; its full sequence is Alanine--tRNA ligase (880 aa).

His548, His552, Cys651, and His655 together coordinate Zn(2+).

This sequence belongs to the class-II aminoacyl-tRNA synthetase family. It depends on Zn(2+) as a cofactor.

The protein localises to the cytoplasm. It carries out the reaction tRNA(Ala) + L-alanine + ATP = L-alanyl-tRNA(Ala) + AMP + diphosphate. Its function is as follows. Catalyzes the attachment of alanine to tRNA(Ala) in a two-step reaction: alanine is first activated by ATP to form Ala-AMP and then transferred to the acceptor end of tRNA(Ala). Also edits incorrectly charged Ser-tRNA(Ala) and Gly-tRNA(Ala) via its editing domain. The sequence is that of Alanine--tRNA ligase from Tropheryma whipplei (strain TW08/27) (Whipple's bacillus).